The following is a 404-amino-acid chain: uncharacterized protein (404 aa).

Helical transmembrane passes span 9 to 29 (IYLI…PYLS), 36 to 56 (GFGE…FIGL), 76 to 96 (LVVK…LLFC), 103 to 123 (IMFY…QLSI), 135 to 155 (FIQV…LEFY), 162 to 182 (KRIL…YLIY), 199 to 219 (AFFY…SFFI), 236 to 256 (LGLY…ILAI), 288 to 308 (IVPI…LFFL), 319 to 339 (IIVF…VNYL), and 366 to 386 (LIFT…LGIL).

Belongs to the polysaccharide synthase family. HI_0867/HI_1700 subfamily.

The protein resides in the cell membrane. This is an uncharacterized protein from Haemophilus influenzae (strain ATCC 51907 / DSM 11121 / KW20 / Rd).